The sequence spans 453 residues: Pentatricopeptide repeat-containing protein At2g38420, mitochondrial (453 aa).

A mitochondrion-targeting transit peptide spans 1 to 77 (MARSSSWHRM…CEPTPQAYRF (77 aa)). 9 PPR repeats span residues 107 to 141 (PESI…RCVP), 142 to 177 (SAYT…GVRL), 178 to 212 (EEST…SVIV), 213 to 249 (DPRL…RFSP), 250 to 284 (GLRD…RVEP), 285 to 319 (DLVC…GLAP), 320 to 354 (DVYT…GSEP), 355 to 389 (NVVT…GVNR), and 390 to 424 (NSHT…NVFV).

It belongs to the PPR family. P subfamily.

Its subcellular location is the mitochondrion. This chain is Pentatricopeptide repeat-containing protein At2g38420, mitochondrial, found in Arabidopsis thaliana (Mouse-ear cress).